A 248-amino-acid polypeptide reads, in one-letter code: MSSSTQVGLKEQLHPLIRDLATGIEATWQRWLNLEPYAAMPADLGYIEGKLEGERLQIENRCYQSREFRKLHLELARVGNNLDILHCVLFPRTTFDLPMFGADLVGGRGQISAAIVDLSPTTIARELSNDYIAGLTALPNPTFQGLRELPTWGDIFSSFCLFIRPGSPEEEAAFLDRALGFLQVHCQQAAAATALTDPEAIATVLEQQRYYCEQQRRNDKTRRVLEKAFGDDWADRYMTTMLFDLPSD.

Belongs to the HY2 family.

The catalysed reaction is (2R,3Z)-phycocyanobilin + 4 oxidized [2Fe-2S]-[ferredoxin] = biliverdin IXalpha + 4 reduced [2Fe-2S]-[ferredoxin] + 4 H(+). Its function is as follows. Catalyzes the four-electron reduction of biliverdin IX-alpha (2-electron reduction at both the A and D rings); the reaction proceeds via an isolatable 2-electron intermediate, 181,182-dihydrobiliverdin. The sequence is that of Phycocyanobilin:ferredoxin oxidoreductase (pcyA) from Synechococcus elongatus (strain ATCC 33912 / PCC 7942 / FACHB-805) (Anacystis nidulans R2).